We begin with the raw amino-acid sequence, 179 residues long: Large ribosomal subunit protein uL6 (179 aa).

Belongs to the universal ribosomal protein uL6 family. As to quaternary structure, part of the 50S ribosomal subunit.

Functionally, this protein binds to the 23S rRNA, and is important in its secondary structure. It is located near the subunit interface in the base of the L7/L12 stalk, and near the tRNA binding site of the peptidyltransferase center. The chain is Large ribosomal subunit protein uL6 from Parasynechococcus marenigrum (strain WH8102).